A 602-amino-acid polypeptide reads, in one-letter code: Serine/threonine-protein phosphatase 2A 56 kDa regulatory subunit delta isoform (602 aa).

Residues 1 to 13 are compositionally biased toward basic and acidic residues; sequence MPYKLKKEKEPPK. The segment at 1–96 is disordered; it reads MPYKLKKEKE…QSSSRFNLSK (96 aa). 5 tandem repeats follow at residues 37–38, 39–40, 41–42, 43–44, and 45–46. The tract at residues 37–52 is 8 X 2 AA approximate tandem repeats of Q-P; that stretch reads QPQPQPQPQPQAQSQP. A compositionally biased stretch (low complexity) spans 46–55; sequence PQAQSQPPSS. Residues 47–48 form a 6; approximate repeat; it reads QA. A 7; approximate repeat occupies 49–50; that stretch reads QS. Residues 51-52 form repeat 8; that stretch reads QP. Threonine 63 carries the phosphothreonine modification. Phosphoserine is present on residues serine 88, serine 89, and serine 90. The short motif at 523-530 is the SH3-binding; class I element; sequence RAPPPLPP. A Nuclear localization signal motif is present at residues 548–565; that stretch reads KRTVETEAVQMLKDIKKE. Phosphoserine occurs at positions 573 and 598.

Belongs to the phosphatase 2A regulatory subunit B56 family. PP2A consists of a common heterodimeric core enzyme, composed of a 36 kDa catalytic subunit (subunit C) and a 65 kDa constant regulatory subunit (PR65 or subunit A), that associates with a variety of regulatory subunits. Proteins that associate with the core dimer include three families of regulatory subunits B (the R2/B/PR55/B55, R3/B''/PR72/PR130/PR59 and R5/B'/B56 families), the 48 kDa variable regulatory subunit, viral proteins, and cell signaling molecules. Interacts with the PP2A A subunit PPP2R1A. Interacts with SGO1. Interacts with ADCY8. Isoform Delta-2 is widely expressed. Isoform Delta-1 is highly expressed in brain.

It is found in the cytoplasm. The protein resides in the nucleus. The B regulatory subunit might modulate substrate selectivity and catalytic activity, and might also direct the localization of the catalytic enzyme to a particular subcellular compartment. This chain is Serine/threonine-protein phosphatase 2A 56 kDa regulatory subunit delta isoform (PPP2R5D), found in Homo sapiens (Human).